The sequence spans 507 residues: ATP synthase subunit alpha, chloroplastic (507 aa).

170–177 lines the ATP pocket; it reads GDRQTGKT.

The protein belongs to the ATPase alpha/beta chains family. In terms of assembly, F-type ATPases have 2 components, CF(1) - the catalytic core - and CF(0) - the membrane proton channel. CF(1) has five subunits: alpha(3), beta(3), gamma(1), delta(1), epsilon(1). CF(0) has four main subunits: a, b, b' and c.

The protein resides in the plastid. It localises to the chloroplast thylakoid membrane. It catalyses the reaction ATP + H2O + 4 H(+)(in) = ADP + phosphate + 5 H(+)(out). Functionally, produces ATP from ADP in the presence of a proton gradient across the membrane. The alpha chain is a regulatory subunit. This is ATP synthase subunit alpha, chloroplastic from Nicotiana sylvestris (Wood tobacco).